A 266-amino-acid chain; its full sequence is Transcription factor atoh8 (266 aa).

The tract at residues Ala140–Gly164 is disordered. Residues Glu150–Gly160 are compositionally biased toward basic and acidic residues. The segment at Thr175–Val188 is basic motif; degenerate. The region spanning Thr175 to Leu227 is the bHLH domain. Positions His189–Leu227 are helix-loop-helix motif.

Its subcellular location is the nucleus. It localises to the nucleus speckle. It is found in the cytoplasm. Functionally, transcription factor that binds a palindromic (canonical) core consensus DNA sequence 5'-CANNTG- 3' known as an E-box element, possibly as a heterodimer with other bHLH proteins. During development, is required for heart looping and swim bladder formation by acting in concert with GATA4 and ZFPM1. During the development of both the retina and skeletal muscles is required for neural retinal cell through modulating PAX6 and NEUROG3 expression and myogenic differentiation. The protein is Transcription factor atoh8 of Danio rerio (Zebrafish).